A 346-amino-acid polypeptide reads, in one-letter code: Outer membrane protein A (346 aa).

The N-terminal stretch at 1–21 (MKKTAIAIAVALAGFATVAQA) is a signal peptide. A run of 8 beta stranded transmembrane segments spans residues 27 to 37 (TWYTGAKLGWS), 55 to 66 (QLGAGAFGGYQV), 70 to 78 (VGFEMGYDW), 96 to 107 (QGVQLTAKLGYP), 112 to 120 (LDIYTRLGG), 142 to 151 (PVFAGGVEYA), 156 to 163 (IATRLEYQ), and 182 to 190 (MLSLGVSYR). The segment at 197–208 (APVVAPAPAPAP) is hinge-like. 4 tandem repeats follow at residues 201-202 (AP), 203-204 (AP), 205-206 (AP), and 207-208 (AP). A 4 X 2 AA tandem repeats of A-P region spans residues 201–208 (APAPAPAP). The region spanning 210–338 (VQTKHFTLKS…RVEIEVKGIK (129 aa)) is the OmpA-like domain. A disulfide bridge connects residues C311 and C323.

Belongs to the outer membrane OOP (TC 1.B.6) superfamily. OmpA family. In terms of assembly, monomer and homodimer.

The protein resides in the cell outer membrane. With TolR probably plays a role in maintaining the position of the peptidoglycan cell wall in the periplasm. Acts as a porin with low permeability that allows slow penetration of small solutes; an internal gate slows down solute passage. Functionally, required for conjugation with F-type plasmids; probably serves as the mating receptor on recipient cells. This is Outer membrane protein A from Escherichia coli O157:H7.